The chain runs to 83 residues: Disintegrin isoform D-3 (83 aa).

Residues 2-83 enclose the Disintegrin domain; sequence PPVCGNELLE…GKSSDCPWNH (82 aa). 7 disulfide bridges follow: C5/C24, C16/C34, C18/C29, C28/C51, C42/C48, C47/C72, and C60/C79. A Cell attachment site motif is present at residues 64–66; the sequence is RGD.

It belongs to the venom metalloproteinase (M12B) family. P-II subfamily. P-IIa sub-subfamily. In terms of assembly, monomer (disintegrin). In terms of tissue distribution, expressed by the venom gland.

The protein localises to the secreted. Functionally, inhibits fibrinogen interaction with platelets. Acts by binding to alpha-IIb/beta-3 (ITGA2B/ITGB3) on the platelet surface and inhibits aggregation induced by ADP, thrombin, platelet-activating factor and collagen. The protein is Disintegrin isoform D-3 of Bitis arietans (African puff adder).